Here is a 612-residue protein sequence, read N- to C-terminus: Dihydroxy-acid dehydratase (612 aa).

Asp81 is a binding site for Mg(2+). Residue Cys122 participates in [2Fe-2S] cluster binding. Residues Asp123 and Lys124 each contribute to the Mg(2+) site. An N6-carboxylysine modification is found at Lys124. Cys193 is a binding site for [2Fe-2S] cluster. Glu489 serves as a coordination point for Mg(2+). The active-site Proton acceptor is the Ser515.

Belongs to the IlvD/Edd family. As to quaternary structure, homodimer. [2Fe-2S] cluster serves as cofactor. The cofactor is Mg(2+).

It catalyses the reaction (2R)-2,3-dihydroxy-3-methylbutanoate = 3-methyl-2-oxobutanoate + H2O. It carries out the reaction (2R,3R)-2,3-dihydroxy-3-methylpentanoate = (S)-3-methyl-2-oxopentanoate + H2O. Its pathway is amino-acid biosynthesis; L-isoleucine biosynthesis; L-isoleucine from 2-oxobutanoate: step 3/4. The protein operates within amino-acid biosynthesis; L-valine biosynthesis; L-valine from pyruvate: step 3/4. Its function is as follows. Functions in the biosynthesis of branched-chain amino acids. Catalyzes the dehydration of (2R,3R)-2,3-dihydroxy-3-methylpentanoate (2,3-dihydroxy-3-methylvalerate) into 2-oxo-3-methylpentanoate (2-oxo-3-methylvalerate) and of (2R)-2,3-dihydroxy-3-methylbutanoate (2,3-dihydroxyisovalerate) into 2-oxo-3-methylbutanoate (2-oxoisovalerate), the penultimate precursor to L-isoleucine and L-valine, respectively. In Xanthomonas campestris pv. campestris (strain 8004), this protein is Dihydroxy-acid dehydratase.